The chain runs to 1229 residues: Nuclear envelope pore membrane protein POM 121C (1229 aa).

The span at 1–10 (MSPAAAAAGA) shows a compositional bias: low complexity. The interval 1 to 24 (MSPAAAAAGAGERRRPIASVRDGR) is disordered. Positions 1-40 (MSPAAAAAGAGERRRPIASVRDGRGRGCGGPAGAALLGLS) are cisternal side. Residues 1–398 (MSPAAAAAGA…AITSSYSSTR (398 aa)) are required for targeting to the nucleus and nuclear pore complex. Over residues 11 to 24 (GERRRPIASVRDGR) the composition is skewed to basic and acidic residues. The chain crosses the membrane as a helical span at residues 41–61 (LVGLLLYLVPAAAALAWLAVG). The segment at 62–1229 (TTAAWWGLSR…QARRQHTRKK (1168 aa)) is pore side. The residue at position 81 (Ser-81) is a Phosphoserine. Disordered stretches follow at residues 90 to 200 (RTLF…LPDR), 296 to 507 (KKKK…LGYS), 579 to 747 (KKMQ…TAPT), 936 to 966 (PLPS…ALTP), and 1202 to 1229 (PSFS…TRKK). Pro residues predominate over residues 155–166 (ARPAPRSTPPSQ). Positions 176–189 (PSLPTPLLRPSGRP) are enriched in low complexity. Phosphoserine is present on residues Ser-322, Ser-328, Ser-348, Ser-370, and Ser-373. A compositionally biased stretch (polar residues) spans 374–400 (LTGAYTSGIPSSSRNAITSSYSSTRGI). Low complexity predominate over residues 409–422 (PSSSPFSSPASSRS). Composition is skewed to basic and acidic residues over residues 427–439 (RPAK…ELCH) and 449–463 (ADKE…DTTP). A compositionally biased stretch (polar residues) spans 468 to 479 (NSNSQSTPGSSG). Residues 612–629 (PPLGLSQSGPPGLLPSPS) are compositionally biased toward low complexity. Polar residues predominate over residues 660 to 673 (QAETATKPQATSAP). 2 stretches are compositionally biased toward low complexity: residues 689–703 (SPSS…SASP) and 726–747 (SVSA…TAPT). Residues 1219 to 1229 (LQARRQHTRKK) show a composition bias toward basic residues.

Belongs to the POM121 family.

The protein resides in the nucleus. Its subcellular location is the nuclear pore complex. It localises to the nucleus membrane. It is found in the endoplasmic reticulum membrane. Its function is as follows. Essential component of the nuclear pore complex (NPC). The repeat-containing domain may be involved in anchoring components of the pore complex to the pore membrane. When overexpressed in cells induces the formation of cytoplasmic annulate lamellae (AL). The protein is Nuclear envelope pore membrane protein POM 121C (POM121C) of Homo sapiens (Human).